A 941-amino-acid polypeptide reads, in one-letter code: Bifunctional glutamine synthetase adenylyltransferase/adenylyl-removing enzyme (941 aa).

The adenylyl removase stretch occupies residues 1-437 (MSIPTASLSP…TAEFAELLAP (437 aa)). The tract at residues 444–941 (PDTLADYWRA…FPLGKDEAAL (498 aa)) is adenylyl transferase.

The protein belongs to the GlnE family. The cofactor is Mg(2+).

The enzyme catalyses [glutamine synthetase]-O(4)-(5'-adenylyl)-L-tyrosine + phosphate = [glutamine synthetase]-L-tyrosine + ADP. The catalysed reaction is [glutamine synthetase]-L-tyrosine + ATP = [glutamine synthetase]-O(4)-(5'-adenylyl)-L-tyrosine + diphosphate. Functionally, involved in the regulation of glutamine synthetase GlnA, a key enzyme in the process to assimilate ammonia. When cellular nitrogen levels are high, the C-terminal adenylyl transferase (AT) inactivates GlnA by covalent transfer of an adenylyl group from ATP to specific tyrosine residue of GlnA, thus reducing its activity. Conversely, when nitrogen levels are low, the N-terminal adenylyl removase (AR) activates GlnA by removing the adenylyl group by phosphorolysis, increasing its activity. The regulatory region of GlnE binds the signal transduction protein PII (GlnB) which indicates the nitrogen status of the cell. The sequence is that of Bifunctional glutamine synthetase adenylyltransferase/adenylyl-removing enzyme from Xanthomonas oryzae pv. oryzae (strain MAFF 311018).